We begin with the raw amino-acid sequence, 242 residues long: Transcriptional activator protein BjaR1 (242 aa).

Residues 173–238 (TPYPSTRLTP…HAVALAIRHK (66 aa)) enclose the HTH luxR-type domain. A DNA-binding region (H-T-H motif) is located at residues 197-216 (AWEIGEILHITQRTAEEHLA).

The protein belongs to the autoinducer-regulated transcriptional regulatory protein family.

Its function is as follows. Transcriptional activator that functions in response to the quorum-sensing autoinducer IV-HSL (isovaleryl-homoserine lactone). Activates BjaI expression. Is sensitive to IV-HSL at concentrations as low as 10 pM. This chain is Transcriptional activator protein BjaR1 (bjaR1), found in Bradyrhizobium diazoefficiens (strain JCM 10833 / BCRC 13528 / IAM 13628 / NBRC 14792 / USDA 110).